The following is a 272-amino-acid chain: U11/U12 small nuclear ribonucleoprotein 35 kDa protein (272 aa).

Positions 51–129 constitute an RRM domain; it reads LTLFVSRLSP…REVFVDFELE (79 aa). 2 stretches are compositionally biased toward basic and acidic residues: residues 146–162 and 190–272; these read GKKESGQLRFGGRDRPF and RDRS…EHNR. The disordered stretch occupies residues 146-272; the sequence is GKKESGQLRF…RKHRSDEHNR (127 aa). Positions 221-258 form a coiled coil; sequence TKDDKEQNAEHTKRERSREQAKNDKDKEKKDSKRERSR.

It localises to the nucleus. This chain is U11/U12 small nuclear ribonucleoprotein 35 kDa protein (snrnp35), found in Xenopus laevis (African clawed frog).